The sequence spans 208 residues: Uracil phosphoribosyltransferase (208 aa).

Residues Arg-78, Arg-103, and 130-138 (DPMLATGGT) each bind 5-phospho-alpha-D-ribose 1-diphosphate. Uracil contacts are provided by residues Ile-193 and 198-200 (GDA). Position 199 (Asp-199) interacts with 5-phospho-alpha-D-ribose 1-diphosphate.

The protein belongs to the UPRTase family. It depends on Mg(2+) as a cofactor.

The catalysed reaction is UMP + diphosphate = 5-phospho-alpha-D-ribose 1-diphosphate + uracil. The protein operates within pyrimidine metabolism; UMP biosynthesis via salvage pathway; UMP from uracil: step 1/1. Allosterically activated by GTP. Functionally, catalyzes the conversion of uracil and 5-phospho-alpha-D-ribose 1-diphosphate (PRPP) to UMP and diphosphate. The sequence is that of Uracil phosphoribosyltransferase from Desulforapulum autotrophicum (strain ATCC 43914 / DSM 3382 / VKM B-1955 / HRM2) (Desulfobacterium autotrophicum).